A 344-amino-acid polypeptide reads, in one-letter code: Tetraacyldisaccharide 4'-kinase (344 aa).

65–72 (HAGGTGKT) is a binding site for ATP.

It belongs to the LpxK family.

It carries out the reaction a lipid A disaccharide + ATP = a lipid IVA + ADP + H(+). Its pathway is glycolipid biosynthesis; lipid IV(A) biosynthesis; lipid IV(A) from (3R)-3-hydroxytetradecanoyl-[acyl-carrier-protein] and UDP-N-acetyl-alpha-D-glucosamine: step 6/6. In terms of biological role, transfers the gamma-phosphate of ATP to the 4'-position of a tetraacyldisaccharide 1-phosphate intermediate (termed DS-1-P) to form tetraacyldisaccharide 1,4'-bis-phosphate (lipid IVA). The protein is Tetraacyldisaccharide 4'-kinase of Neisseria meningitidis serogroup A / serotype 4A (strain DSM 15465 / Z2491).